The sequence spans 554 residues: Hydroxylamine reductase (554 aa).

4 residues coordinate [2Fe-2S] cluster: cysteine 3, cysteine 6, cysteine 18, and cysteine 25. Positions 252, 276, 320, 408, 436, 461, 495, and 497 each coordinate hybrid [4Fe-2O-2S] cluster. Cysteine 408 carries the post-translational modification Cysteine persulfide.

This sequence belongs to the HCP family. Requires [2Fe-2S] cluster as cofactor. The cofactor is hybrid [4Fe-2O-2S] cluster.

It localises to the cytoplasm. The catalysed reaction is A + NH4(+) + H2O = hydroxylamine + AH2 + H(+). Catalyzes the reduction of hydroxylamine to form NH(3) and H(2)O. This is Hydroxylamine reductase from Shewanella baltica (strain OS185).